We begin with the raw amino-acid sequence, 582 residues long: UPF0329 protein ECU07_0070 (582 aa).

Residues 326–386 (EEKAKSKKKG…KTGKKSKGDQ (61 aa)) form a disordered region. Residues 330 to 339 (KSKKKGKKKS) show a composition bias toward basic residues. A compositionally biased stretch (basic and acidic residues) spans 344-354 (EAKEEEKKESG).

The protein belongs to the UPF0329 family.

The protein is UPF0329 protein ECU07_0070 of Encephalitozoon cuniculi (strain GB-M1) (Microsporidian parasite).